Reading from the N-terminus, the 263-residue chain is Acyl-[acyl-carrier-protein]--UDP-N-acetylglucosamine O-acyltransferase (263 aa).

Belongs to the transferase hexapeptide repeat family. LpxA subfamily. Homotrimer.

It localises to the cytoplasm. The catalysed reaction is a (3R)-hydroxyacyl-[ACP] + UDP-N-acetyl-alpha-D-glucosamine = a UDP-3-O-[(3R)-3-hydroxyacyl]-N-acetyl-alpha-D-glucosamine + holo-[ACP]. The protein operates within glycolipid biosynthesis; lipid IV(A) biosynthesis; lipid IV(A) from (3R)-3-hydroxytetradecanoyl-[acyl-carrier-protein] and UDP-N-acetyl-alpha-D-glucosamine: step 1/6. Its function is as follows. Involved in the biosynthesis of lipid A, a phosphorylated glycolipid that anchors the lipopolysaccharide to the outer membrane of the cell. This chain is Acyl-[acyl-carrier-protein]--UDP-N-acetylglucosamine O-acyltransferase, found in Campylobacter jejuni subsp. doylei (strain ATCC BAA-1458 / RM4099 / 269.97).